Here is a 308-residue protein sequence, read N- to C-terminus: Putative proline iminopeptidase (308 aa).

The AB hydrolase-1 domain maps to 30 to 290 (KPVLYIHGGP…LYVTNNAGHS (261 aa)). Ser105 serves as the catalytic Nucleophile. Asp261 is a catalytic residue. His289 serves as the catalytic Proton donor.

Belongs to the peptidase S33 family.

Its subcellular location is the cytoplasm. The enzyme catalyses Release of N-terminal proline from a peptide.. Functionally, specifically catalyzes the removal of N-terminal proline residues from peptides. In Mycoplasma genitalium (strain ATCC 33530 / DSM 19775 / NCTC 10195 / G37) (Mycoplasmoides genitalium), this protein is Putative proline iminopeptidase (pip).